A 453-amino-acid polypeptide reads, in one-letter code: Aldehyde dehydrogenase, dimeric NADP-preferring (453 aa).

Ser2 bears the N-acetylserine mark. N6-acetyllysine is present on Lys178. Residue 188 to 193 coordinates NAD(+); it reads GSTAVG. N6-acetyllysine is present on Lys194. Active-site residues include Glu210 and Cys244.

The protein belongs to the aldehyde dehydrogenase family. As to quaternary structure, homodimer.

The protein localises to the cytoplasm. The enzyme catalyses an aldehyde + NAD(+) + H2O = a carboxylate + NADH + 2 H(+). It catalyses the reaction octanal + NAD(+) + H2O = octanoate + NADH + 2 H(+). Its function is as follows. ALDHs play a major role in the detoxification of alcohol-derived acetaldehyde. They are involved in the metabolism of corticosteroids, biogenic amines, neurotransmitters, and lipid peroxidation. Oxidizes medium and long chain aldehydes into non-toxic fatty acids. Preferentially oxidizes aromatic aldehyde substrates. Comprises about 50 percent of corneal epithelial soluble proteins. May play a role in preventing corneal damage caused by ultraviolet light. This chain is Aldehyde dehydrogenase, dimeric NADP-preferring (Aldh3a1), found in Rattus norvegicus (Rat).